The chain runs to 600 residues: ATP-dependent lipid A-core flippase (600 aa).

The next 4 membrane-spanning stretches (helical) occupy residues 26-46, 82-102, 167-187, and 266-286; these read VGIFLLSILGFVIFASTQPML, LLIVLIAAWQGLGSFLGNYFL, VFLFIYLLMMNWKLTLVMLAI, and PMLQLVIYSAMAVLMFLVLFL. One can recognise an ABC transmembrane type-1 domain in the interval 30-321; the sequence is LLSILGFVIF…LSEVSSTIQK (292 aa). The ABC transporter domain maps to 353 to 589; that stretch reads LEVKNLSFFY…NGYYARLHAM (237 aa). Residue 387 to 394 participates in ATP binding; the sequence is GRSGSGKS.

This sequence belongs to the ABC transporter superfamily. Lipid exporter (TC 3.A.1.106) family. In terms of assembly, homodimer.

The protein localises to the cell inner membrane. The enzyme catalyses ATP + H2O + lipid A-core oligosaccharideSide 1 = ADP + phosphate + lipid A-core oligosaccharideSide 2.. Its function is as follows. Involved in lipopolysaccharide (LPS) biosynthesis. Translocates lipid A-core from the inner to the outer leaflet of the inner membrane. Transmembrane domains (TMD) form a pore in the inner membrane and the ATP-binding domain (NBD) is responsible for energy generation. The chain is ATP-dependent lipid A-core flippase from Pseudomonas syringae pv. tomato (strain ATCC BAA-871 / DC3000).